Consider the following 702-residue polypeptide: Arylphorin (702 aa).

A signal peptide spans 1-16 (MQTVLFLAALVSLAAA). N-linked (GlcNAc...) asparagine glycosylation is found at Asn-211 and Asn-481.

This sequence belongs to the hemocyanin family. Hemolymph.

The protein localises to the secreted. Larval storage protein (LSP) which may serve as a store of amino acids for synthesis of adult proteins. Binds the A.niger cell wall component alpha-1,3-glucan, a fungal pathogen-associated molecular pattern (PAMP) that activates the host immune response. This Galleria mellonella (Greater wax moth) protein is Arylphorin (LOC113516268).